The sequence spans 1224 residues: ATP-dependent helicase/nuclease subunit A (1224 aa).

One can recognise a UvrD-like helicase ATP-binding domain in the interval 15–480; sequence VIWTDAQWQS…IDLSQNFRSR (466 aa). Position 36 to 43 (36 to 43) interacts with ATP; it reads AAAGSGKT. In terms of domain architecture, UvrD-like helicase C-terminal spans 497 to 791; the sequence is EQVGEISYDD…RMMTIHSSKG (295 aa).

It belongs to the helicase family. AddA subfamily. As to quaternary structure, heterodimer of AddA and AddB/RexB. Mg(2+) is required as a cofactor.

The catalysed reaction is Couples ATP hydrolysis with the unwinding of duplex DNA by translocating in the 3'-5' direction.. The enzyme catalyses ATP + H2O = ADP + phosphate + H(+). The heterodimer acts as both an ATP-dependent DNA helicase and an ATP-dependent, dual-direction single-stranded exonuclease. Recognizes the chi site generating a DNA molecule suitable for the initiation of homologous recombination. The AddA nuclease domain is required for chi fragment generation; this subunit has the helicase and 3' -&gt; 5' nuclease activities. In Staphylococcus epidermidis (strain ATCC 12228 / FDA PCI 1200), this protein is ATP-dependent helicase/nuclease subunit A.